A 97-amino-acid chain; its full sequence is Antitoxin YafN (97 aa).

This sequence belongs to the phD/YefM antitoxin family. Probably forms a complex with the mRNA interferase YafO which inhibits the mRNA interferase activity.

Its function is as follows. Antitoxin component of a type II toxin-antitoxin (TA) system. Functions as an mRNA interferase antitoxin; overexpression prevents YafO-mediated cessation of cell growth and inhibition of cell proliferation. This Escherichia coli (strain K12) protein is Antitoxin YafN (yafN).